The primary structure comprises 283 residues: MGVFMEKLKTYLELIRVKNCITASIGGIIGYLISSNFEIDILKSLLVFFVVFFVCAYGNVINDIFDIEIDRINKPSRPLPSGKIKLNEAKKFSAILLILGLVLSLFINIYALIIAVINALFLYLYAKKYKKYKPIGNFIIGYLTGSVFLFGGVAGKNVMPVVILFLCSLLSIWGREIVKDFEDMEGDKKEGVISLPIKYGKKSLYFATFLVVLAVILSPLPYILKIFGIWYLILIAICDILFIYAMALLLKEPNKETASKVSKFLKIIMNIVLLAFIVGAIKL.

8 helical membrane passes run 21 to 41 (ITASIGGIIGYLISSNFEIDI), 45 to 65 (LLVFFVVFFVCAYGNVINDIF), 97 to 117 (LILGLVLSLFINIYALIIAVI), 135 to 155 (IGNFIIGYLTGSVFLFGGVAG), 158 to 178 (VMPVVILFLCSLLSIWGREIV), 204 to 224 (LYFATFLVVLAVILSPLPYIL), 226 to 246 (IFGIWYLILIAICDILFIYAM), and 261 to 281 (VSKFLKIIMNIVLLAFIVGAI).

This sequence belongs to the UbiA prenyltransferase family. DGGGP synthase subfamily. Requires Mg(2+) as cofactor.

The protein localises to the cell membrane. The enzyme catalyses sn-3-O-(geranylgeranyl)glycerol 1-phosphate + (2E,6E,10E)-geranylgeranyl diphosphate = 2,3-bis-O-(geranylgeranyl)-sn-glycerol 1-phosphate + diphosphate. It functions in the pathway membrane lipid metabolism; glycerophospholipid metabolism. Its function is as follows. Prenyltransferase that catalyzes the transfer of the geranylgeranyl moiety of geranylgeranyl diphosphate (GGPP) to the C2 hydroxyl of (S)-3-O-geranylgeranylglyceryl phosphate (GGGP). This reaction is the second ether-bond-formation step in the biosynthesis of archaeal membrane lipids. The protein is Digeranylgeranylglyceryl phosphate synthase of Methanocaldococcus jannaschii (strain ATCC 43067 / DSM 2661 / JAL-1 / JCM 10045 / NBRC 100440) (Methanococcus jannaschii).